A 446-amino-acid polypeptide reads, in one-letter code: Putative diacyglycerol O-acyltransferase MT3481 (446 aa).

H129 serves as the catalytic Proton acceptor. The interval 425–446 (SRALPSAARRGRPSVPTARARH) is disordered.

It belongs to the long-chain O-acyltransferase family.

The catalysed reaction is an acyl-CoA + a 1,2-diacyl-sn-glycerol = a triacyl-sn-glycerol + CoA. It participates in glycerolipid metabolism; triacylglycerol biosynthesis. This is Putative diacyglycerol O-acyltransferase MT3481 from Mycobacterium tuberculosis (strain CDC 1551 / Oshkosh).